The sequence spans 293 residues: Ethanolamine ammonia-lyase small subunit (293 aa).

Adenosylcob(III)alamin contacts are provided by V207 and E228.

Belongs to the EutC family. As to quaternary structure, the basic unit is a heterodimer which dimerizes to form tetramers. The heterotetramers trimerize; 6 large subunits form a core ring with 6 small subunits projecting outwards. Requires adenosylcob(III)alamin as cofactor.

It is found in the bacterial microcompartment. It carries out the reaction ethanolamine = acetaldehyde + NH4(+). It functions in the pathway amine and polyamine degradation; ethanolamine degradation. In terms of biological role, catalyzes the deamination of various vicinal amino-alcohols to oxo compounds. Allows this organism to utilize ethanolamine as the sole source of nitrogen and carbon in the presence of external vitamin B12. In Clostridioides difficile (strain 630) (Peptoclostridium difficile), this protein is Ethanolamine ammonia-lyase small subunit.